Consider the following 117-residue polypeptide: Small ribosomal subunit protein bS6 (117 aa).

The protein belongs to the bacterial ribosomal protein bS6 family.

In terms of biological role, binds together with bS18 to 16S ribosomal RNA. This Trichodesmium erythraeum (strain IMS101) protein is Small ribosomal subunit protein bS6.